The sequence spans 251 residues: Pyrroloquinoline-quinone synthase (251 aa).

The protein belongs to the PqqC family.

It catalyses the reaction 6-(2-amino-2-carboxyethyl)-7,8-dioxo-1,2,3,4,7,8-hexahydroquinoline-2,4-dicarboxylate + 3 O2 = pyrroloquinoline quinone + 2 H2O2 + 2 H2O + H(+). It functions in the pathway cofactor biosynthesis; pyrroloquinoline quinone biosynthesis. In terms of biological role, ring cyclization and eight-electron oxidation of 3a-(2-amino-2-carboxyethyl)-4,5-dioxo-4,5,6,7,8,9-hexahydroquinoline-7,9-dicarboxylic-acid to PQQ. The polypeptide is Pyrroloquinoline-quinone synthase (Pseudomonas putida (strain ATCC 700007 / DSM 6899 / JCM 31910 / BCRC 17059 / LMG 24140 / F1)).